Reading from the N-terminus, the 403-residue chain is Keratin, type I cytoskeletal 19 (403 aa).

Positions 1–82 (MTSYSYRQSS…TVTDGLLGGN (82 aa)) are head. R7 bears the Omega-N-methylarginine mark. Residue S14 is modified to Phosphoserine. R24 bears the Asymmetric dimethylarginine; alternate mark. R24 bears the Omega-N-methylarginine; alternate mark. S27 carries the post-translational modification Phosphoserine. R32 is modified (omega-N-methylarginine). Phosphoserine occurs at positions 35 and 40. Omega-N-methylarginine occurs at positions 43 and 51. Residues S57 and S67 each carry the phosphoserine modification. Residues 83–118 (EKITMQNLNDRLASYLDKVRALEQANGELEVKIRDW) are coil 1A. The IF rod domain maps to 83-394 (EKITMQNLND…SLLEGQEAHY (312 aa)). The tract at residues 119-136 (YQKQGPGPFRDYSQYFKT) is linker 1. The segment at 137-228 (IEDLRDKILG…KNHEEEISAL (92 aa)) is coil 1B. Residues 229–251 (RSQVGGQVSVEVDSTPGIDLAKI) are linker 12. The interval 247–393 (DLAKILSEMR…RSLLEGQEAH (147 aa)) is necessary for interaction with PNN. Positions 252–390 (LSEMRSQYEA…ATYRSLLEGQ (139 aa)) are coil 2. A Phosphothreonine modification is found at T326. The interval 391 to 403 (EAHYNSLSIAKAL) is rod-like helical tail. Residue Y394 is modified to Phosphotyrosine. S398 is modified (phosphoserine).

The protein belongs to the intermediate filament family. As to quaternary structure, heterotetramer of two type I and two type II keratins. Interacts with PNN. Interacts with the actin-binding domain of DMD. Expressed in brain, heart, skin and in costameres of myoplasm at the sarcolemmal membrane in skeletal and cardiac muscle fibers. Undifferentiated gonads and somatic cells of ovarian cords throughout the fetal ovary development.

Involved in the organization of myofibers. Together with KRT8, helps to link the contractile apparatus to dystrophin at the costameres of striated muscle. This Rattus norvegicus (Rat) protein is Keratin, type I cytoskeletal 19 (Krt19).